A 263-amino-acid polypeptide reads, in one-letter code: Endonuclease 8 (263 aa).

Residue Pro2 is the Schiff-base intermediate with DNA of the active site. Catalysis depends on Glu3, which acts as the Proton donor. Residue Lys53 is the Proton donor; for beta-elimination activity of the active site. Residues Gln70, Arg125, and Asn169 each coordinate DNA. Residues 229–263 (KVFHRDGELCERCGGIIEKTTLSSRPFYWCPGCQH) form an FPG-type zinc finger. Arg253 serves as the catalytic Proton donor; for delta-elimination activity.

The protein belongs to the FPG family. Zn(2+) serves as cofactor.

The enzyme catalyses 2'-deoxyribonucleotide-(2'-deoxyribose 5'-phosphate)-2'-deoxyribonucleotide-DNA = a 3'-end 2'-deoxyribonucleotide-(2,3-dehydro-2,3-deoxyribose 5'-phosphate)-DNA + a 5'-end 5'-phospho-2'-deoxyribonucleoside-DNA + H(+). In terms of biological role, involved in base excision repair of DNA damaged by oxidation or by mutagenic agents. Acts as a DNA glycosylase that recognizes and removes damaged bases. Has a preference for oxidized pyrimidines, such as thymine glycol, 5,6-dihydrouracil and 5,6-dihydrothymine. Has AP (apurinic/apyrimidinic) lyase activity and introduces nicks in the DNA strand. Cleaves the DNA backbone by beta-delta elimination to generate a single-strand break at the site of the removed base with both 3'- and 5'-phosphates. The chain is Endonuclease 8 from Escherichia coli (strain SE11).